Here is a 244-residue protein sequence, read N- to C-terminus: Transcription factor A, mitochondrial (244 aa).

Residues 1–42 constitute a mitochondrion transit peptide; sequence MALFRGMWGVLRTLGRTGVEMCAGCGGRIPSPVSLICIPKCF. The segment at residues 49–117 is a DNA-binding region (HMG box 1); sequence PKKPMSSYLR…VYKEAVSKYK (69 aa). Phosphoserine; by PKA occurs at positions 54, 55, and 60. Lys66 carries the post-translational modification N6-succinyllysine. Phosphothreonine is present on Thr121. A DNA-binding region (HMG box 2) is located at residues 154–218; that stretch reads PKRPRSAYNI…RYDNEMKSWE (65 aa). Phosphoserine; by PKA is present on Ser159. Phosphoserine is present on Ser192. The tract at residues 221-244 is disordered; the sequence is MAEVGRSDLIRRSVKRPPGDISEN.

Monomer; binds DNA as a monomer. Homodimer. Component of the mitochondrial transcription initiation complex, composed at least of TFB2M, TFAM and POLRMT. In this complex TFAM recruits POLRMT to the promoter whereas TFB2M induces structural changes in POLRMT to enable promoter opening and trapping of the DNA non-template strand. Upon metabolic stress, forms a complex composed of FOXO3, SIRT3, TFAM and POLRMT. Interacts with TFB1M and TFB2M. Interacts with CLPX; this enhances DNA-binding. In terms of processing, phosphorylation by PKA within the HMG box 1 impairs DNA binding and promotes degradation by the AAA+ Lon protease. As to expression, the mitochondrial isoform is widely expressed while the nuclear isoform is testis-specific.

It localises to the mitochondrion. The protein resides in the mitochondrion matrix. The protein localises to the mitochondrion nucleoid. It is found in the nucleus. In terms of biological role, binds to the mitochondrial light strand promoter and functions in mitochondrial transcription regulation. Component of the mitochondrial transcription initiation complex, composed at least of TFB2M, TFAM and POLRMT that is required for basal transcription of mitochondrial DNA. In this complex, TFAM recruits POLRMT to a specific promoter whereas TFB2M induces structural changes in POLRMT to enable promoter opening and trapping of the DNA non-template strand. Required for accurate and efficient promoter recognition by the mitochondrial RNA polymerase. Promotes transcription initiation from the HSP1 and the light strand promoter by binding immediately upstream of transcriptional start sites. Is able to unwind DNA. Bends the mitochondrial light strand promoter DNA into a U-turn shape via its HMG boxes. Required for maintenance of normal levels of mitochondrial DNA. May play a role in organizing and compacting mitochondrial DNA. May also function as a transcriptional activator or may have a structural role in the compaction of nuclear DNA during spermatogenesis. In Rattus norvegicus (Rat), this protein is Transcription factor A, mitochondrial.